The sequence spans 1603 residues: Pentafunctional AROM polypeptide (1603 aa).

Residues 1-384 are 3-dehydroquinate synthase; the sequence is MGVPTKISIL…YEPRASTVSN (384 aa). Residues 44–46, 81–84, 114–116, and aspartate 119 each bind NAD(+); these read DTN, ESSK, and GGV. Residue arginine 130 coordinates 7-phospho-2-dehydro-3-deoxy-D-arabino-heptonate. 139 to 140 serves as a coordination point for NAD(+); it reads TT. Aspartate 146 and lysine 152 together coordinate 7-phospho-2-dehydro-3-deoxy-D-arabino-heptonate. Residue lysine 161 coordinates NAD(+). Asparagine 162 contacts 7-phospho-2-dehydro-3-deoxy-D-arabino-heptonate. NAD(+) is bound by residues 179-182 and asparagine 190; that span reads FLNT. Zn(2+) is bound at residue glutamate 194. Residues 194–197 and lysine 250 each bind 7-phospho-2-dehydro-3-deoxy-D-arabino-heptonate; that span reads EVIK. The Proton acceptor; for 3-dehydroquinate synthase activity role is filled by glutamate 260. 7-phospho-2-dehydro-3-deoxy-D-arabino-heptonate is bound by residues 264–268 and histidine 271; that span reads RNLLN. Histidine 271 contacts Zn(2+). The active-site Proton acceptor; for 3-dehydroquinate synthase activity is histidine 275. 7-phospho-2-dehydro-3-deoxy-D-arabino-heptonate contacts are provided by histidine 287 and lysine 356. Histidine 287 provides a ligand contact to Zn(2+). The segment at 397–842 is EPSP synthase; sequence VYPGFPKSLN…WNTLAQTFKV (446 aa). Cysteine 824 (for EPSP synthase activity) is an active-site residue. The tract at residues 872–1064 is shikimate kinase; it reads AASIFIIGMR…RRKENTFFVS (193 aa). Residue 879 to 886 participates in ATP binding; the sequence is GMRGAGKT. The 3-dehydroquinase stretch occupies residues 1065–1285; that stretch reads LTFPDLTPAS…AAPGQLSARE (221 aa). Histidine 1188 acts as the Proton acceptor; for 3-dehydroquinate dehydratase activity in catalysis. The active-site Schiff-base intermediate with substrate; for 3-dehydroquinate dehydratase activity is lysine 1216. Residues 1298–1603 form a shikimate dehydrogenase region; that stretch reads AKKFAVIGKP…GVSSSDDTIS (306 aa).

In the N-terminal section; belongs to the sugar phosphate cyclases superfamily. Dehydroquinate synthase family. The protein in the 2nd section; belongs to the EPSP synthase family. It in the 3rd section; belongs to the shikimate kinase family. This sequence in the 4th section; belongs to the type-I 3-dehydroquinase family. In the C-terminal section; belongs to the shikimate dehydrogenase family. Homodimer. It depends on Zn(2+) as a cofactor.

It is found in the cytoplasm. It carries out the reaction 7-phospho-2-dehydro-3-deoxy-D-arabino-heptonate = 3-dehydroquinate + phosphate. The catalysed reaction is 3-dehydroquinate = 3-dehydroshikimate + H2O. The enzyme catalyses shikimate + NADP(+) = 3-dehydroshikimate + NADPH + H(+). It catalyses the reaction shikimate + ATP = 3-phosphoshikimate + ADP + H(+). It carries out the reaction 3-phosphoshikimate + phosphoenolpyruvate = 5-O-(1-carboxyvinyl)-3-phosphoshikimate + phosphate. Its pathway is metabolic intermediate biosynthesis; chorismate biosynthesis; chorismate from D-erythrose 4-phosphate and phosphoenolpyruvate: step 2/7. It functions in the pathway metabolic intermediate biosynthesis; chorismate biosynthesis; chorismate from D-erythrose 4-phosphate and phosphoenolpyruvate: step 3/7. It participates in metabolic intermediate biosynthesis; chorismate biosynthesis; chorismate from D-erythrose 4-phosphate and phosphoenolpyruvate: step 4/7. The protein operates within metabolic intermediate biosynthesis; chorismate biosynthesis; chorismate from D-erythrose 4-phosphate and phosphoenolpyruvate: step 5/7. Its pathway is metabolic intermediate biosynthesis; chorismate biosynthesis; chorismate from D-erythrose 4-phosphate and phosphoenolpyruvate: step 6/7. Functionally, the AROM polypeptide catalyzes 5 consecutive enzymatic reactions in prechorismate polyaromatic amino acid biosynthesis. This Paracoccidioides brasiliensis (strain Pb03) protein is Pentafunctional AROM polypeptide.